The following is a 477-amino-acid chain: MKVNLPAFERAGVMVVGDVMLDRYWYGPTCRISPEAPVPVVKVNTVEERPGGAANVAMNIASLGANARLVGLTGIDDAARALSKTLAEVNVKCDFVSVPTHPTITKLRVLSRNQQLIRLDFEEGFEGVDPQPLHERINQALGSIGALVLSDYAKGALTSVQTMISLARQAGVPVLIDPKGTDFERYRGATLLTPNLSEFEAVAGKCKSEDELVERGMKLIADYDLSALLVTRSEQGMTLLQPNKAPLHMPTQAQEVYDVTGAGDTVIGVLAATLAAGNTLEEACYFANAAAGVVVGKLGTSTVSPIELENAVRGRADTGFGVMTEEELRQAVASARKRGEKVVMTNGVFDILHAGHVSYLANARKLGDRLIVAVNSDASTKRLKGDSRPVNPLEQRMIVLGALESVDWVVSFEEDTPQRLIAGILPDLLVKGGDYKPEEIAGSEEVWANGGEVMVLNFEDGCSTTNIIKKIQTESEK.

A ribokinase region spans residues 1–318; it reads MKVNLPAFER…ENAVRGRADT (318 aa). An ATP-binding site is contributed by 195–198; it reads NLSE. Asp264 is a catalytic residue. Positions 344–477 are cytidylyltransferase; sequence MTNGVFDILH…IKKIQTESEK (134 aa).

It in the N-terminal section; belongs to the carbohydrate kinase PfkB family. In the C-terminal section; belongs to the cytidylyltransferase family. Homodimer.

The catalysed reaction is D-glycero-beta-D-manno-heptose 7-phosphate + ATP = D-glycero-beta-D-manno-heptose 1,7-bisphosphate + ADP + H(+). It catalyses the reaction D-glycero-beta-D-manno-heptose 1-phosphate + ATP + H(+) = ADP-D-glycero-beta-D-manno-heptose + diphosphate. Its pathway is nucleotide-sugar biosynthesis; ADP-L-glycero-beta-D-manno-heptose biosynthesis; ADP-L-glycero-beta-D-manno-heptose from D-glycero-beta-D-manno-heptose 7-phosphate: step 1/4. It functions in the pathway nucleotide-sugar biosynthesis; ADP-L-glycero-beta-D-manno-heptose biosynthesis; ADP-L-glycero-beta-D-manno-heptose from D-glycero-beta-D-manno-heptose 7-phosphate: step 3/4. Its function is as follows. Catalyzes the phosphorylation of D-glycero-D-manno-heptose 7-phosphate at the C-1 position to selectively form D-glycero-beta-D-manno-heptose-1,7-bisphosphate. Catalyzes the ADP transfer from ATP to D-glycero-beta-D-manno-heptose 1-phosphate, yielding ADP-D-glycero-beta-D-manno-heptose. This chain is Bifunctional protein HldE, found in Salmonella enteritidis PT4 (strain P125109).